A 541-amino-acid chain; its full sequence is tRNA uridine(34) acetyltransferase (541 aa).

A radical S-adenosyl-L-methionine (rSAM) region spans residues 76 to 336 (KPVRTISGVA…GEYKPYREEE (261 aa)). Residues 79 to 350 (RTISGVAVVA…ISYAKSIMPK (272 aa)) enclose the Radical SAM core domain. [4Fe-4S] cluster contacts are provided by Cys-96, Cys-101, and Cys-104. Residues Lys-156, 467–470 (QLHV), 491–493 (YGR), and Tyr-524 each bind acetyl-CoA. The N-acetyltransferase domain occupies 401 to 541 (VMYKKGIMPD…VGAYMGKYLE (141 aa)).

The protein belongs to the ELP3 family. [4Fe-4S] cluster serves as cofactor.

It carries out the reaction uridine(34) in tRNA + acetyl-CoA + S-adenosyl-L-methionine + H2O = 5-(carboxymethyl)uridine(34) in tRNA + 5'-deoxyadenosine + L-methionine + CoA + 2 H(+). It functions in the pathway tRNA modification. Functionally, tRNA uridine(34) acetyltransferase, which mediates formation of carboxymethyluridine in the wobble base at position 34 in tRNAs. The proposed mechanism is the following: (i) recruits S-adenosyl-L-methionine and cleaves it to generate a 5'-deoxyadenosine radical (5'-dA) in the radical S-adenosyl-L-methionine (rSAM) region, (ii) hydrolyzes acetyl-CoA in the N-acetyltransferase domain and (iii) an acetyl radical is formed by the products of the two domains and (iv) is transferred onto the C5 position of uridine(34) in the bound tRNA molecule. Does not show protein lysine acetyltransferase activity. The polypeptide is tRNA uridine(34) acetyltransferase (Methanocaldococcus jannaschii (strain ATCC 43067 / DSM 2661 / JAL-1 / JCM 10045 / NBRC 100440) (Methanococcus jannaschii)).